Reading from the N-terminus, the 155-residue chain is MKLLIVAVGQRVPDWAQTACNDYAKRLPPELKLELKAVKTEPRAGKTLASLLAAERGRIEAAIPRGAQVVALDERGTRLTTLALAERLRGWQLVGDTVALLVGGPDGLDPALRQAAHERIRLSDLTLPHALVRVLLIEQLYRAWSLHAGHPYHRE.

Residues Leu72, Gly103, and 122–127 contribute to the S-adenosyl-L-methionine site; that span reads LSDLTL.

This sequence belongs to the RNA methyltransferase RlmH family. As to quaternary structure, homodimer.

The protein resides in the cytoplasm. It catalyses the reaction pseudouridine(1915) in 23S rRNA + S-adenosyl-L-methionine = N(3)-methylpseudouridine(1915) in 23S rRNA + S-adenosyl-L-homocysteine + H(+). Functionally, specifically methylates the pseudouridine at position 1915 (m3Psi1915) in 23S rRNA. This Verminephrobacter eiseniae (strain EF01-2) protein is Ribosomal RNA large subunit methyltransferase H.